The following is a 305-amino-acid chain: Oligopeptide transport system permease protein OppC (305 aa).

6 helical membrane passes run 43–63 (AMVG…APMF), 105–125 (ISIF…VIWG), 166–185 (LFTI…ARIV), 212–232 (LFKH…TLTV), 236–256 (IFTE…LASW), and 274–294 (LFFP…VGDG). The ABC transmembrane type-1 domain maps to 103–292 (ARISIFIGVA…ITMFGFNVVG (190 aa)).

This sequence belongs to the binding-protein-dependent transport system permease family. OppBC subfamily. The complex is composed of two ATP-binding proteins (OppD and OppF), two transmembrane proteins (OppB and OppC) and a solute-binding protein (OppA).

The protein resides in the cell membrane. In terms of biological role, part of the ABC transporter complex OppABCDF involved in the uptake of oligopeptides. Probably responsible for the translocation of the substrate across the membrane. Required for sporulation and genetic competence. The sequence is that of Oligopeptide transport system permease protein OppC from Bacillus subtilis (strain 168).